A 601-amino-acid chain; its full sequence is DNA ligase 2 (601 aa).

Glu263 provides a ligand contact to ATP. Lys265 (N6-AMP-lysine intermediate) is an active-site residue. 6 residues coordinate ATP: Arg270, Arg285, Glu314, Phe354, Arg432, and Lys438.

This sequence belongs to the ATP-dependent DNA ligase family. The cofactor is Mg(2+).

It catalyses the reaction ATP + (deoxyribonucleotide)n-3'-hydroxyl + 5'-phospho-(deoxyribonucleotide)m = (deoxyribonucleotide)n+m + AMP + diphosphate.. DNA ligase that seals nicks in double-stranded DNA during DNA replication, DNA recombination and DNA repair. This Thermofilum pendens (strain DSM 2475 / Hrk 5) protein is DNA ligase 2.